Consider the following 485-residue polypeptide: tRNA sulfurtransferase (485 aa).

Positions 61–165 constitute a THUMP domain; the sequence is EELIALLQRI…DDKMMLVKTR (105 aa). Residues 183–184, Lys-265, Gly-287, and Gln-296 each bind ATP; that span reads LI. A disulfide bond links Cys-344 and Cys-456. The region spanning 404 to 483 is the Rhodanese domain; it reads LGENEVILDI…FSNVRVFAKN (80 aa). Cys-456 (cysteine persulfide intermediate) is an active-site residue.

It belongs to the ThiI family.

It is found in the cytoplasm. It catalyses the reaction [ThiI sulfur-carrier protein]-S-sulfanyl-L-cysteine + a uridine in tRNA + 2 reduced [2Fe-2S]-[ferredoxin] + ATP + H(+) = [ThiI sulfur-carrier protein]-L-cysteine + a 4-thiouridine in tRNA + 2 oxidized [2Fe-2S]-[ferredoxin] + AMP + diphosphate. The catalysed reaction is [ThiS sulfur-carrier protein]-C-terminal Gly-Gly-AMP + S-sulfanyl-L-cysteinyl-[cysteine desulfurase] + AH2 = [ThiS sulfur-carrier protein]-C-terminal-Gly-aminoethanethioate + L-cysteinyl-[cysteine desulfurase] + A + AMP + 2 H(+). It functions in the pathway cofactor biosynthesis; thiamine diphosphate biosynthesis. In terms of biological role, catalyzes the ATP-dependent transfer of a sulfur to tRNA to produce 4-thiouridine in position 8 of tRNAs, which functions as a near-UV photosensor. Also catalyzes the transfer of sulfur to the sulfur carrier protein ThiS, forming ThiS-thiocarboxylate. This is a step in the synthesis of thiazole, in the thiamine biosynthesis pathway. The sulfur is donated as persulfide by IscS. The protein is tRNA sulfurtransferase of Haemophilus influenzae (strain 86-028NP).